Reading from the N-terminus, the 382-residue chain is tRNA(Met) cytidine acetate ligase (382 aa).

Residues 9-22 (VTEY…HAYQ), Gly-103, Asn-152, and Arg-177 contribute to the ATP site.

It belongs to the TmcAL family.

The protein localises to the cytoplasm. The enzyme catalyses cytidine(34) in elongator tRNA(Met) + acetate + ATP = N(4)-acetylcytidine(34) in elongator tRNA(Met) + AMP + diphosphate. Catalyzes the formation of N(4)-acetylcytidine (ac(4)C) at the wobble position of elongator tRNA(Met), using acetate and ATP as substrates. First activates an acetate ion to form acetyladenylate (Ac-AMP) and then transfers the acetyl group to tRNA to form ac(4)C34. In Levilactobacillus brevis (strain ATCC 367 / BCRC 12310 / CIP 105137 / JCM 1170 / LMG 11437 / NCIMB 947 / NCTC 947) (Lactobacillus brevis), this protein is tRNA(Met) cytidine acetate ligase.